Here is a 357-residue protein sequence, read N- to C-terminus: Histidinol-phosphate aminotransferase 1 (357 aa).

K210 carries the post-translational modification N6-(pyridoxal phosphate)lysine.

It belongs to the class-II pyridoxal-phosphate-dependent aminotransferase family. Histidinol-phosphate aminotransferase subfamily. Homodimer. Pyridoxal 5'-phosphate serves as cofactor.

The enzyme catalyses L-histidinol phosphate + 2-oxoglutarate = 3-(imidazol-4-yl)-2-oxopropyl phosphate + L-glutamate. Its pathway is amino-acid biosynthesis; L-histidine biosynthesis; L-histidine from 5-phospho-alpha-D-ribose 1-diphosphate: step 7/9. The protein is Histidinol-phosphate aminotransferase 1 of Methylococcus capsulatus (strain ATCC 33009 / NCIMB 11132 / Bath).